The sequence spans 510 residues: MLILLGLLCLYTGLYVARTYWRLRHFPGPLVARFTDLGRLWWVKTSRSHHHHMGLHSRYGQYVRLGPNMISISDPDAIPLVYPIRPGVPKSDFYRSMMPYTRKGRSLPLVFNTRDEDLHKRLKTPIAHLYSLSNILTFEAFVDQVLEILFRQFEERFVPDQAPFNLGNWLQYFAFDVMGTMSFSRRYGFLEKGRDDTGLLSAIWAFMKAAAPVTQMPWVDLVWNKNPFIALFRATPAQPILNVVLSRINDRRNELYSTTSTPEKVNERDFLSRFMHIQSNSDTIPPWAVTAWSFSNVIAGSDTTAVAMKTLWYNLLLHPATMHRLRKELVQAQQQSKLSHPFPAWNEISGLPYLNACVNEALRIHPPFCLPFERIVPAEGMTIGDHFFPGGTVIGMNPWVINRHRPTFGEDADAWRPERWLEDPARTRQMENTLLSFGAGRRVCLGKNIALLELKKLTSALVLHYELEIVNPEKFQSQNFFFFKQEGLYAAVKRRSAGSPELYPDDAVPH.

A signal peptide spans 1-17; it reads MLILLGLLCLYTGLYVA. Cys-444 contacts heme.

The protein belongs to the cytochrome P450 family. It depends on heme as a cofactor.

The protein operates within secondary metabolite biosynthesis. In terms of biological role, cytochrome P450 monooxygenase; part of the gene cluster 41 that mediates the biosynthesis of an extracellular and diffusible metabolite that is able to stimulate colony sclerotial production. The sequence is that of Cytochrome P450 monooxygenase AFLA_114810 from Aspergillus flavus (strain ATCC 200026 / FGSC A1120 / IAM 13836 / NRRL 3357 / JCM 12722 / SRRC 167).